The chain runs to 921 residues: Inter-alpha-trypsin inhibitor heavy chain H4 (921 aa).

A signal peptide spans 1-27 (MKTLSPTGYGLLLVLPLLLAVLQSTTA). Residues 28-146 (HKNDINIYSL…KVTFELVYEE (119 aa)) enclose the VIT domain. Residues Asn80, Asn205, and Asn242 are each glycosylated (N-linked (GlcNAc...) asparagine). Positions 270-428 (PKNVIFVIDT…YAFLEKMALE (159 aa)) constitute a VWFA domain. N-linked (GlcNAc...) asparagine glycosylation is found at Asn513 and Asn577. A disordered region spans residues 591 to 646 (KPEGQEQSQVAEKPVENGNRQGNTHSGHSSFQFHSVGDRTSRLTGGSSVDPVFSHR). The span at 608 to 623 (GNRQGNTHSGHSSFQF) shows a compositional bias: polar residues. An O-linked (GalNAc...) threonine glycan is attached at Thr712. A disulfide bridge links Cys738 with Cys916.

This sequence belongs to the ITIH family. As to quaternary structure, interacts (via C-terminus) with DNAJC1 (via SANT 2 domain). Appears to be both N- and O-glycosylated. In terms of processing, cleaved by plasma kallikrein to yield 55- and 25-kDa fragments. As to expression, liver specific.

The protein localises to the secreted. Type II acute-phase protein (APP) involved in inflammatory responses to trauma. May also play a role in liver development or regeneration. The polypeptide is Inter-alpha-trypsin inhibitor heavy chain H4 (ITIH4) (Sus scrofa (Pig)).